A 183-amino-acid polypeptide reads, in one-letter code: Oleosin 5 (183 aa).

Residues 1–39 (MADVRTHSHQLQVHPQRQHEGGIKVLYPQSGPSSTQVLA) are polar. A run of 3 helical transmembrane segments spans residues 37-57 (VLAV…AGLT), 66-86 (MLAF…AFVI), and 87-107 (GLAM…LSSM). The tract at residues 40 to 113 (VFVGVPIGGT…LSSMSWVLNY (74 aa)) is hydrophobic. The segment at 144–183 (KDAGQTIEDKAHDVREAKTFDVRDRDTTKGTHNVRDTKTT) is disordered.

It belongs to the oleosin family.

The protein localises to the lipid droplet. It localises to the membrane. May have a structural role to stabilize the lipid body during desiccation of the seed by preventing coalescence of the oil. Probably interacts with both lipid and phospholipid moieties of lipid bodies. May also provide recognition signals for specific lipase anchorage in lipolysis during seedling growth. This is Oleosin 5 from Arabidopsis thaliana (Mouse-ear cress).